Reading from the N-terminus, the 48-residue chain is M-oxotoxin-Ot1c (48 aa).

It is found in the secreted. The protein resides in the target cell membrane. Functionally, disrupts cell membranes, particularly those rich in phosphocholine, through formation of pores. Has antimicrobial activity, hemolytic activity and insecticidal activity. This Oxyopes takobius (Lynx spider) protein is M-oxotoxin-Ot1c.